Consider the following 427-residue polypeptide: L-rhamnose isomerase (427 aa).

H264, D296, and D298 together coordinate Mn(2+).

The protein belongs to the rhamnose isomerase family. Requires Mn(2+) as cofactor.

It localises to the cytoplasm. It catalyses the reaction L-rhamnopyranose = L-rhamnulose. It participates in carbohydrate degradation; L-rhamnose degradation; glycerone phosphate from L-rhamnose: step 1/3. Catalyzes the interconversion of L-rhamnose and L-rhamnulose. In Lactiplantibacillus plantarum (strain ATCC BAA-793 / NCIMB 8826 / WCFS1) (Lactobacillus plantarum), this protein is L-rhamnose isomerase.